We begin with the raw amino-acid sequence, 172 residues long: 3-hydroxydecanoyl-[acyl-carrier-protein] dehydratase (172 aa).

Histidine 71 is an active-site residue.

It belongs to the thioester dehydratase family. FabA subfamily. As to quaternary structure, homodimer.

The protein resides in the cytoplasm. The catalysed reaction is a (3R)-hydroxyacyl-[ACP] = a (2E)-enoyl-[ACP] + H2O. It carries out the reaction (3R)-hydroxydecanoyl-[ACP] = (2E)-decenoyl-[ACP] + H2O. It catalyses the reaction (2E)-decenoyl-[ACP] = (3Z)-decenoyl-[ACP]. The protein operates within lipid metabolism; fatty acid biosynthesis. In terms of biological role, necessary for the introduction of cis unsaturation into fatty acids. Catalyzes the dehydration of (3R)-3-hydroxydecanoyl-ACP to E-(2)-decenoyl-ACP and then its isomerization to Z-(3)-decenoyl-ACP. Can catalyze the dehydratase reaction for beta-hydroxyacyl-ACPs with saturated chain lengths up to 16:0, being most active on intermediate chain length. This chain is 3-hydroxydecanoyl-[acyl-carrier-protein] dehydratase, found in Edwardsiella ictaluri (strain 93-146).